The following is a 796-amino-acid chain: AUGMIN subunit 5 (796 aa).

The segment at 79 to 120 is disordered; the sequence is HGGSSNASIGSSVNPGKEESKSKGRRKDKTVTGESSSYAEDR. The segment covering 80-92 has biased composition (polar residues); sequence GGSSNASIGSSVN. Coiled-coil stretches lie at residues 115-191 and 462-501; these read SYAE…EATR and GKER…LKKK.

The protein belongs to the HAUS5 family. Part of the augmin complex composed of 8 subunits. The complex acts on microtubules and interacts with gamma-tubulin in spindles and the phragmoplast.

It localises to the cytoplasm. The protein resides in the cytoskeleton. The protein localises to the spindle. It is found in the phragmoplast. In terms of biological role, involved in microtubules reorganization during spindle and phragmoplast development. This is AUGMIN subunit 5 from Arabidopsis thaliana (Mouse-ear cress).